Reading from the N-terminus, the 87-residue chain is Large ribosomal subunit protein bL31B-2/bL31B-3 (87 aa).

Belongs to the bacterial ribosomal protein bL31 family. Type B subfamily. Part of the 50S ribosomal subunit.

In Escherichia coli O157:H7, this protein is Large ribosomal subunit protein bL31B-2/bL31B-3 (rpmE2-2).